We begin with the raw amino-acid sequence, 288 residues long: Glycine--tRNA ligase alpha subunit (288 aa).

The protein belongs to the class-II aminoacyl-tRNA synthetase family. Tetramer of two alpha and two beta subunits.

It localises to the cytoplasm. The enzyme catalyses tRNA(Gly) + glycine + ATP = glycyl-tRNA(Gly) + AMP + diphosphate. The protein is Glycine--tRNA ligase alpha subunit of Rickettsia massiliae (strain Mtu5).